A 304-amino-acid chain; its full sequence is D-alanine--D-alanine ligase (304 aa).

The ATP-grasp domain occupies 107 to 300 (KRLWQGSGLP…FDELVARILG (194 aa)). Position 134–186 (134–186 (VGYPVIVKPAREGSSLGMSRVEGPEELAEAYRVAAAYDDTVLAEAWVEGEEYT)) interacts with ATP. Positions 254, 267, and 269 each coordinate Mg(2+).

Belongs to the D-alanine--D-alanine ligase family. Mg(2+) is required as a cofactor. Mn(2+) serves as cofactor.

It is found in the cytoplasm. It carries out the reaction 2 D-alanine + ATP = D-alanyl-D-alanine + ADP + phosphate + H(+). It participates in cell wall biogenesis; peptidoglycan biosynthesis. Its function is as follows. Cell wall formation. The chain is D-alanine--D-alanine ligase from Halorhodospira halophila (strain DSM 244 / SL1) (Ectothiorhodospira halophila (strain DSM 244 / SL1)).